We begin with the raw amino-acid sequence, 273 residues long: Putative pyruvate, phosphate dikinase regulatory protein (273 aa).

151 to 158 (GVSRTSKT) contributes to the ADP binding site.

It belongs to the pyruvate, phosphate/water dikinase regulatory protein family. PDRP subfamily.

The catalysed reaction is N(tele)-phospho-L-histidyl/L-threonyl-[pyruvate, phosphate dikinase] + ADP = N(tele)-phospho-L-histidyl/O-phospho-L-threonyl-[pyruvate, phosphate dikinase] + AMP + H(+). It carries out the reaction N(tele)-phospho-L-histidyl/O-phospho-L-threonyl-[pyruvate, phosphate dikinase] + phosphate + H(+) = N(tele)-phospho-L-histidyl/L-threonyl-[pyruvate, phosphate dikinase] + diphosphate. Bifunctional serine/threonine kinase and phosphorylase involved in the regulation of the pyruvate, phosphate dikinase (PPDK) by catalyzing its phosphorylation/dephosphorylation. This Desulfitobacterium hafniense (strain DSM 10664 / DCB-2) protein is Putative pyruvate, phosphate dikinase regulatory protein.